The following is a 350-amino-acid chain: Kelch domain-containing protein 8A (350 aa).

7 Kelch repeats span residues 1 to 31 (MEVPNVKDFQWKRLAPLPSRRVYCSLLETGG), 32 to 79 (QVYA…ALGK), 81 to 127 (IMVI…AKDY), 128 to 175 (RVYA…LRGS), 176 to 222 (KIYV…TLDN), 224 to 278 (LYSL…GLSG), and 279 to 326 (RVIV…VFKN).

This is Kelch domain-containing protein 8A (Klhdc8a) from Mus musculus (Mouse).